Reading from the N-terminus, the 24-residue chain is Lantibiotic 107891 (24 aa).

The residue at position 2 (T2) is a (E)-2,3-didehydrobutyrine. Positions 3-7 (SWSLC) form a cross-link, lanthionine (Ser-Cys). W4 carries the post-translational modification 6'-chlorotryptophan. S5 carries the post-translational modification 2,3-didehydroalanine (Ser). The beta-methyllanthionine (Thr-Cys) cross-link spans 8–11 (TPGC). 2 cross-links (lanthionine (Ser-Cys)) span residues 13 to 20 (SPGGGSNC) and 18 to 23 (SNCSFC). P14 is subject to 3,4-dihydroxyproline; in form A1. P14 carries the post-translational modification 4-hydroxyproline; in form A2. The segment at residues 21-24 (SFCC) is a cross-link (S-(2-aminovinyl)-D-cysteine (Ser-Cys)).

This sequence belongs to the type A lantibiotic family. Post-translationally, maturation of lantibiotics involves the enzymatic conversion of Thr, and Ser into dehydrated AA and the formation of thioether bonds with cysteine. The C-terminal lanthionine undergoes decarboxylation. This is followed by membrane translocation and cleavage of the modified precursor. Occurs in 2 forms, A1 contains 3,4-dihydroxyproline at Pro-14, A2 contains 4-hydroxyproline at Pro-14. The patent report does not provide the stereochemistry of the modified prolines. In terms of processing, the patent report does not describe whether the 2,3-didehydrobutyrine is the E- or Z-isomer. In several diagrams it is shown as the E-isomer.

In terms of biological role, lanthionine-containing peptide antibiotic (lantibiotic) active on Gram-positive bacteria. The bactericidal activity of lantibiotics is based on depolarization of energized bacterial cytoplasmic membranes, initiated by the formation of aqueous transmembrane pores. In Microbispora sp. (strain 107891), this protein is Lantibiotic 107891.